Consider the following 181-residue polypeptide: Malignant T-cell-amplified sequence 1-B (181 aa).

Residues 92–171 (LPHQQVDKGA…IGIENIHYLN (80 aa)) enclose the PUA domain.

Belongs to the MCTS1 family.

The protein localises to the cytoplasm. In terms of biological role, plays a role as translation enhancer and involved in cell cycle regulation. The polypeptide is Malignant T-cell-amplified sequence 1-B (mcts1-b) (Xenopus laevis (African clawed frog)).